The sequence spans 142 residues: Small heat shock protein IbpB (142 aa).

A sHSP domain is found at 26 to 137; the sequence is AGESQSFPPY…APQRIAISER (112 aa).

It belongs to the small heat shock protein (HSP20) family. As to quaternary structure, homodimer. Forms homomultimers of about 100-150 subunits at optimal growth temperatures. Conformation changes to oligomers at high temperatures or high ionic concentrations. The decrease in size of the multimers is accompanied by an increase in chaperone activity.

It localises to the cytoplasm. In terms of biological role, associates with aggregated proteins, together with IbpA, to stabilize and protect them from irreversible denaturation and extensive proteolysis during heat shock and oxidative stress. Aggregated proteins bound to the IbpAB complex are more efficiently refolded and reactivated by the ATP-dependent chaperone systems ClpB and DnaK/DnaJ/GrpE. Its activity is ATP-independent. This Klebsiella pneumoniae subsp. pneumoniae (strain ATCC 700721 / MGH 78578) protein is Small heat shock protein IbpB.